The primary structure comprises 140 residues: Gonadotropin subunit beta-2 (140 aa).

The N-terminal stretch at 1–23 is a signal peptide; that stretch reads MGTPVKILVVLFSVIVLLAVAQS. 6 disulfide bridges follow: Cys29–Cys77, Cys43–Cys92, Cys46–Cys130, Cys54–Cys108, Cys58–Cys110, and Cys113–Cys120. Asn33 is a glycosylation site (N-linked (GlcNAc...) asparagine).

This sequence belongs to the glycoprotein hormones subunit beta family. As to quaternary structure, heterodimer of an alpha and a beta chain.

It localises to the secreted. Involved in gametogenesis and steroidogenesis. The sequence is that of Gonadotropin subunit beta-2 (cgbb) from Carassius auratus (Goldfish).